We begin with the raw amino-acid sequence, 463 residues long: Serine/threonine-protein kinase sgk-1 (463 aa).

Residues 135–392 (FDYLTTIGKG…FRDIRDHPFF (258 aa)) enclose the Protein kinase domain. Residues 141–149 (IGKGSFGRV) and Lys164 contribute to the ATP site. Asp259 acts as the Proton acceptor in catalysis. The AGC-kinase C-terminal domain maps to 393 to 463 (LPVDWDKLLN…TFVDTNRVLV (71 aa)).

It belongs to the protein kinase superfamily. AGC Ser/Thr protein kinase family. As to quaternary structure, interacts with pdk-1, akt-1, akt-2 and daf-16. Part of a complex containing sgk-1, akt-1 and akt-2. Interacts with let-92 phosphatase regulatory subunit pptr-1. It depends on Mg(2+) as a cofactor. Expressed in late embryos just before hatching. At postembryonic stages, expressed in sensory and motor neurons and in the intestine. Highly expressed in the intestine and head and tail neurons.

The protein localises to the cytoplasm. The protein resides in the nucleus. It is found in the apical cell membrane. It carries out the reaction L-seryl-[protein] + ATP = O-phospho-L-seryl-[protein] + ADP + H(+). The enzyme catalyses L-threonyl-[protein] + ATP = O-phospho-L-threonyl-[protein] + ADP + H(+). Its activity is regulated as follows. Phosphorylated and activated by pdk-1. Its function is as follows. Acts downstream of PI3 kinase age-1 and kinase pdk-1 in the daf-2/insulin receptor-like transduction pathway. Essential role in regulating development, stress response, and longevity. Phosphorylates Forkhead-related daf-16 and the longevity-promoting skn-1 transcription factors, which inhibits their entry into the nucleus and antagonizes their function. Promotes the cytoplasmic localization of the transcription factor pqm-1. Plays a role in the intracellular trafficking of proteins such as mig-14 to the cell membrane, and this may be through positively regulating ceramide synthesis. Acts downstream of rict-1 to regulate fat storage, size, development and vitellogenesis. Downstream of age-1 and together with akt-1/2, promotes cell survival during embryonic development. Plays a role in maintaining the gonadal basement membrane through antagonizing akt-1 activity. Does not appear to play a role in immune function. This Caenorhabditis elegans protein is Serine/threonine-protein kinase sgk-1.